The chain runs to 606 residues: Phosphogluconate dehydratase (606 aa).

Residues Cys-156 and Cys-223 each coordinate [4Fe-4S] cluster.

The protein belongs to the IlvD/Edd family. Requires [4Fe-4S] cluster as cofactor.

It catalyses the reaction 6-phospho-D-gluconate = 2-dehydro-3-deoxy-6-phospho-D-gluconate + H2O. Its pathway is carbohydrate metabolism; Entner-Doudoroff pathway. In terms of biological role, catalyzes the dehydration of 6-phospho-D-gluconate to 2-dehydro-3-deoxy-6-phospho-D-gluconate. The protein is Phosphogluconate dehydratase of Rhizobium meliloti (strain 1021) (Ensifer meliloti).